The following is a 348-amino-acid chain: Alcohol dehydrogenase 2 (348 aa).

Residue Ser2 is modified to N-acetylserine. Zn(2+)-binding residues include Cys44, His67, Cys98, Cys101, Cys104, Cys112, and Cys154. Residues 178 to 184 (GAAGGLG), Asp202, Lys207, 269 to 271 (VGL), and Arg341 each bind NAD(+).

This sequence belongs to the zinc-containing alcohol dehydrogenase family. Homotetramer. Zn(2+) serves as cofactor.

Its subcellular location is the cytoplasm. The enzyme catalyses a primary alcohol + NAD(+) = an aldehyde + NADH + H(+). It carries out the reaction a secondary alcohol + NAD(+) = a ketone + NADH + H(+). This Kluyveromyces marxianus (Yeast) protein is Alcohol dehydrogenase 2 (ADH2).